The following is a 357-amino-acid chain: Uroporphyrinogen decarboxylase (357 aa).

Substrate-binding positions include 27 to 31, Asp77, Tyr154, Thr209, and His327; that span reads RQAGR.

The protein belongs to the uroporphyrinogen decarboxylase family. Homodimer.

It is found in the cytoplasm. It catalyses the reaction uroporphyrinogen III + 4 H(+) = coproporphyrinogen III + 4 CO2. It functions in the pathway porphyrin-containing compound metabolism; protoporphyrin-IX biosynthesis; coproporphyrinogen-III from 5-aminolevulinate: step 4/4. In terms of biological role, catalyzes the decarboxylation of four acetate groups of uroporphyrinogen-III to yield coproporphyrinogen-III. This chain is Uroporphyrinogen decarboxylase, found in Nitrosococcus oceani (strain ATCC 19707 / BCRC 17464 / JCM 30415 / NCIMB 11848 / C-107).